A 156-amino-acid chain; its full sequence is 6,7-dimethyl-8-ribityllumazine synthase (156 aa).

Residues phenylalanine 22, 57-59 (AVE), and 81-83 (CVI) each bind 5-amino-6-(D-ribitylamino)uracil. 86–87 (GT) provides a ligand contact to (2S)-2-hydroxy-3-oxobutyl phosphate. Histidine 89 functions as the Proton donor in the catalytic mechanism. 5-amino-6-(D-ribitylamino)uracil is bound at residue phenylalanine 114. A (2S)-2-hydroxy-3-oxobutyl phosphate-binding site is contributed by arginine 128.

This sequence belongs to the DMRL synthase family. As to quaternary structure, forms an icosahedral capsid composed of 60 subunits, arranged as a dodecamer of pentamers.

The enzyme catalyses (2S)-2-hydroxy-3-oxobutyl phosphate + 5-amino-6-(D-ribitylamino)uracil = 6,7-dimethyl-8-(1-D-ribityl)lumazine + phosphate + 2 H2O + H(+). The protein operates within cofactor biosynthesis; riboflavin biosynthesis; riboflavin from 2-hydroxy-3-oxobutyl phosphate and 5-amino-6-(D-ribitylamino)uracil: step 1/2. Functionally, catalyzes the formation of 6,7-dimethyl-8-ribityllumazine by condensation of 5-amino-6-(D-ribitylamino)uracil with 3,4-dihydroxy-2-butanone 4-phosphate. This is the penultimate step in the biosynthesis of riboflavin. The sequence is that of 6,7-dimethyl-8-ribityllumazine synthase from Tolumonas auensis (strain DSM 9187 / NBRC 110442 / TA 4).